The following is a 210-amino-acid chain: Acyl-homoserine-lactone synthase (210 aa).

Belongs to the autoinducer synthase family.

The catalysed reaction is a fatty acyl-[ACP] + S-adenosyl-L-methionine = an N-acyl-L-homoserine lactone + S-methyl-5'-thioadenosine + holo-[ACP] + H(+). Its function is as follows. Required for the synthesis of OHHL (N-(3-oxohexanoyl)-L-homoserine lactone), an autoinducer molecule which binds to EsaR. OHHL is necessary for biosynthesis of EPS virulence factor (extracellular heteropolysaccharide) which plays a role in the development of Stewart's wilt on sweet corn. The polypeptide is Acyl-homoserine-lactone synthase (esaI) (Pantoea stewartii subsp. stewartii (Erwinia stewartii)).